Consider the following 1357-residue polypeptide: DNA-directed RNA polymerase subunit beta (1357 aa).

Belongs to the RNA polymerase beta chain family. The RNAP catalytic core consists of 2 alpha, 1 beta, 1 beta' and 1 omega subunit. When a sigma factor is associated with the core the holoenzyme is formed, which can initiate transcription.

It catalyses the reaction RNA(n) + a ribonucleoside 5'-triphosphate = RNA(n+1) + diphosphate. Functionally, DNA-dependent RNA polymerase catalyzes the transcription of DNA into RNA using the four ribonucleoside triphosphates as substrates. The polypeptide is DNA-directed RNA polymerase subunit beta (Pseudomonas aeruginosa (strain LESB58)).